A 96-amino-acid polypeptide reads, in one-letter code: U-stichotoxin-Hau2b (96 aa).

Residues Met1–Ala18 form the signal peptide. 2 propeptides span residues Lys19–Arg29 and Glu30–Pro33. 2 disulfides stabilise this stretch: Cys40–Cys51 and Cys43–Cys58. Propeptides lie at residues Arg62 to Arg64 and Glu65 to Pro68. 2 disulfides stabilise this stretch: Cys75/Cys86 and Cys78/Cys93.

Belongs to the sea anemone BBH family.

The protein resides in the secreted. Its subcellular location is the nematocyst. In terms of biological role, neurotoxin that paralyzes freshwater crabs at high concentration. This chain is U-stichotoxin-Hau2b, found in Heteractis aurora (Banded sea anemone).